The chain runs to 487 residues: Aromatic-L-amino-acid decarboxylase (487 aa).

M1 is modified (N-acetylmethionine). A run of 2 repeats spans residues E58–E115 and M118–A178. A 2 X approximate tandem repeats region spans residues E58 to A178. Residue T82 coordinates substrate. The pyridoxal 5'-phosphate site is built by A148 and S149. H192 serves as a coordination point for substrate. T246 and N300 together coordinate pyridoxal 5'-phosphate. The residue at position 303 (K303) is an N6-(pyridoxal phosphate)lysine.

This sequence belongs to the group II decarboxylase family. As to quaternary structure, homodimer. Pyridoxal 5'-phosphate serves as cofactor.

It carries out the reaction L-dopa + H(+) = dopamine + CO2. The catalysed reaction is 5-hydroxy-L-tryptophan + H(+) = serotonin + CO2. The protein operates within catecholamine biosynthesis; dopamine biosynthesis; dopamine from L-tyrosine: step 2/2. Functionally, catalyzes the decarboxylation of L-3,4-dihydroxyphenylalanine (DOPA) to dopamine and L-5-hydroxytryptophan to serotonin. The protein is Aromatic-L-amino-acid decarboxylase (DDC) of Bos taurus (Bovine).